We begin with the raw amino-acid sequence, 632 residues long: Phosphomethylpyrimidine synthase (632 aa).

The segment covering 1-23 (MNIRSNPQQTVPAVTTGPLSSSR) has biased composition (polar residues). Residues 1-26 (MNIRSNPQQTVPAVTTGPLSSSRKIF) are disordered. Residues Asn221, Met250, Tyr279, His315, 335–337 (SRG), 376–379 (DGLR), and Glu415 each bind substrate. His419 contacts Zn(2+). Residue Tyr442 participates in substrate binding. A Zn(2+)-binding site is contributed by His483. [4Fe-4S] cluster contacts are provided by Cys563, Cys566, and Cys571.

Belongs to the ThiC family. Homodimer. [4Fe-4S] cluster serves as cofactor.

The catalysed reaction is 5-amino-1-(5-phospho-beta-D-ribosyl)imidazole + S-adenosyl-L-methionine = 4-amino-2-methyl-5-(phosphooxymethyl)pyrimidine + CO + 5'-deoxyadenosine + formate + L-methionine + 3 H(+). It participates in cofactor biosynthesis; thiamine diphosphate biosynthesis. In terms of biological role, catalyzes the synthesis of the hydroxymethylpyrimidine phosphate (HMP-P) moiety of thiamine from aminoimidazole ribotide (AIR) in a radical S-adenosyl-L-methionine (SAM)-dependent reaction. This is Phosphomethylpyrimidine synthase from Bradyrhizobium diazoefficiens (strain JCM 10833 / BCRC 13528 / IAM 13628 / NBRC 14792 / USDA 110).